The primary structure comprises 128 residues: MVLPKHMRLKGHRCFDFIYKEGSRFYSSSMVLRVTDANKKPQVKGKQSKTRHSIKCAISISNKVSKKSVTRNKLRRLFHHHLSLRLSNMACDNEIWAFISLKPSCMKNPDSTLLKECDKLLTKAGITK.

It belongs to the RnpA family. Consists of a catalytic RNA component (M1 or rnpB) and a protein subunit.

The enzyme catalyses Endonucleolytic cleavage of RNA, removing 5'-extranucleotides from tRNA precursor.. Its function is as follows. RNaseP catalyzes the removal of the 5'-leader sequence from pre-tRNA to produce the mature 5'-terminus. It can also cleave other RNA substrates such as 4.5S RNA. The protein component plays an auxiliary but essential role in vivo by binding to the 5'-leader sequence and broadening the substrate specificity of the ribozyme. The chain is Ribonuclease P protein component from Prochlorococcus marinus (strain NATL2A).